The sequence spans 195 residues: Glycerol-3-phosphate acyltransferase (195 aa).

The next 5 membrane-spanning stretches (helical) occupy residues 7-27 (IFIL…SYVI), 52-72 (LALL…AIAQ), 80-100 (ILFL…YLFF), 113-133 (LIFI…ICFL), and 147-167 (LIAL…IFTI).

It belongs to the PlsY family. In terms of assembly, probably interacts with PlsX.

Its subcellular location is the cell inner membrane. It catalyses the reaction an acyl phosphate + sn-glycerol 3-phosphate = a 1-acyl-sn-glycero-3-phosphate + phosphate. It participates in lipid metabolism; phospholipid metabolism. In terms of biological role, catalyzes the transfer of an acyl group from acyl-phosphate (acyl-PO(4)) to glycerol-3-phosphate (G3P) to form lysophosphatidic acid (LPA). This enzyme utilizes acyl-phosphate as fatty acyl donor, but not acyl-CoA or acyl-ACP. This Ehrlichia ruminantium (strain Welgevonden) protein is Glycerol-3-phosphate acyltransferase.